A 692-amino-acid chain; its full sequence is Elongation factor G (692 aa).

In terms of domain architecture, tr-type G spans 8–282 (DKTRNIGIMA…AVLDYLPAPT (275 aa)). GTP-binding positions include 17–24 (AHIDAGKT), 81–85 (DTPGH), and 135–138 (NKMD).

This sequence belongs to the TRAFAC class translation factor GTPase superfamily. Classic translation factor GTPase family. EF-G/EF-2 subfamily.

The protein localises to the cytoplasm. In terms of biological role, catalyzes the GTP-dependent ribosomal translocation step during translation elongation. During this step, the ribosome changes from the pre-translocational (PRE) to the post-translocational (POST) state as the newly formed A-site-bound peptidyl-tRNA and P-site-bound deacylated tRNA move to the P and E sites, respectively. Catalyzes the coordinated movement of the two tRNA molecules, the mRNA and conformational changes in the ribosome. The polypeptide is Elongation factor G (Bacillus pumilus (strain SAFR-032)).